The primary structure comprises 351 residues: NADP-dependent isopropanol dehydrogenase (351 aa).

Zn(2+) is bound by residues Cys-37, His-59, Glu-60, and Asp-150. NADP(+) contacts are provided by residues 175-178 (IGAV), 198-200 (GSR), Tyr-218, 265-267 (INY), and Lys-340.

This sequence belongs to the zinc-containing alcohol dehydrogenase family. As to quaternary structure, homotetramer. Requires Zn(2+) as cofactor.

It carries out the reaction propan-2-ol + NADP(+) = acetone + NADPH + H(+). Alcohol dehydrogenase with a preference for medium chain secondary alcohols, such as 2-butanol and isopropanol. Has very low activity with primary alcohols, such as ethanol. Under physiological conditions, the enzyme reduces aldehydes and 2-ketones to produce secondary alcohols. Is active with acetaldehyde and propionaldehyde. The chain is NADP-dependent isopropanol dehydrogenase (adh) from Clostridium beijerinckii (Clostridium MP).